A 35-amino-acid chain; its full sequence is Thrombin-like enzyme cerastobin (35 aa).

In terms of domain architecture, Peptidase S1 spans 1 to 35 (VIGGAKCNINEHRSIVLLYSSRLFGHTLINKEWVL).

This sequence belongs to the peptidase S1 family. Snake venom subfamily. Monomer. As to expression, expressed by the venom gland.

The protein resides in the secreted. With respect to regulation, inhibited by diisopropylfluorophosphate (DFP). In terms of biological role, thrombin-like snake venom serine protease, that cleaves both alpha-chain (FGA) and beta-chain (FGB) of fibrinogen. Partially degrades factor X (F10), and release bradykinin from kininogen (KNG). Potently induces platelet aggregation. Shows a proteolytic activity towards protein constituents of the platelets cytoskeleton. Hydrolyzes actin, actin-binding protein, and P235. Shows a preferential cleavage at Arg-|-Xaa bonds. The protein is Thrombin-like enzyme cerastobin of Cerastes vipera (Sahara sand viper).